Here is a 239-residue protein sequence, read N- to C-terminus: MMDLFETNTYLFNDLRYLEEGDHGPLQHLDMSGVSPLYNGNDSPLSPGQDNVPSETGGESSGDEHVLAPPGLRSHCEGQCLMWACKICKRKSAPTDRRKAATLRERRRLKKINEAFDALKRKTVANPNQRLPKVEILRSAISYIERLQDLLQTLDEQERSQSGASDTRNDKEQNRPSGGDYRWKKASNTWPTSADHSAIINQRDGNCESSATSSLLCLSSIVSSISDDKTNLRQGVQED.

The disordered stretch occupies residues 28–64; it reads HLDMSGVSPLYNGNDSPLSPGQDNVPSETGGESSGDE. Over residues 38 to 58 the composition is skewed to polar residues; sequence YNGNDSPLSPGQDNVPSETGG. Residues 96-147 form the bHLH domain; sequence DRRKAATLRERRRLKKINEAFDALKRKTVANPNQRLPKVEILRSAISYIERL. The segment at 155-189 is disordered; the sequence is DEQERSQSGASDTRNDKEQNRPSGGDYRWKKASNT.

Efficient DNA binding requires dimerization with another bHLH protein.

The protein resides in the nucleus. In terms of biological role, involved in muscle differentiation (myogenic factor). Induces fibroblasts to differentiate into myoblasts. Probable sequence specific DNA-binding protein. This chain is Myogenic factor 6 (myf6), found in Takifugu rubripes (Japanese pufferfish).